We begin with the raw amino-acid sequence, 434 residues long: MKNWRTLILGLVICANTAFAAPQEVDKVAAVVDNGVVLQSDIDGLLQSVKMNAQQSGLQVPDDSTLRHQILERLIMDNIQLQMAKKMGITITDQALDKAIADIAAQNRMTLAQMRSRLAADGLSYDTYREQIRKEMLTSEVRNNEVRRRITILPQEVESLAKQMGNQVSGDTELNLSHILIPLPENPTQQQVDQAEDLANKLVADIKGGADFGKLAIANSADSQALKGGQMGWGKLQELPSLFAERLQSAHKGEIVGPIRSGVGFHILKVNDMRGADQTISVTEVNARHILLKPSPMMTDEQARAKLEAAAAEIKSGKTSFATIAKEISQDPGSAMQGGELGWASPDIYDPAFRDALMKLKKGEISAPVHSSFGWHLIQLVDTRQVDKTDAAQKERAYRMLFNRKFAEEAQTWMQEQRAAAYVKILDGSNAQPQ.

The N-terminal stretch at 1–20 (MKNWRTLILGLVICANTAFA) is a signal peptide. PpiC domains lie at 171–272 (DTEL…KVND) and 282–382 (VTEV…QLVD).

Its subcellular location is the periplasm. It catalyses the reaction [protein]-peptidylproline (omega=180) = [protein]-peptidylproline (omega=0). In terms of biological role, chaperone involved in the correct folding and assembly of outer membrane proteins. Recognizes specific patterns of aromatic residues and the orientation of their side chains, which are found more frequently in integral outer membrane proteins. May act in both early periplasmic and late outer membrane-associated steps of protein maturation. The sequence is that of Chaperone SurA from Yersinia pestis bv. Antiqua (strain Antiqua).